A 263-amino-acid polypeptide reads, in one-letter code: MLTKRIIPCLDVQNGRVVKNVRFFENHRDAGDPLALAQLYEAQQADELVFYDITATHEGRQLLLDVAARVAEQVMMPLTVGGGVNAVSDFRQLLLAGADKISVNSGAVRRPELIREASDHFGAQCVVLSIDAKRRPGSEGWTVHVGGGRVDTGLDLIEWAQQGQALGAGEICLNVMDADGTRAGFDLEATRAVASAVDLPVIASGGAGRLEDFRDVLLDGETGGRADAALAASVFHFGELTVPQVKTYLRGEGLPVRPEWREA.

Active-site residues include Asp11 and Asp131.

It belongs to the HisA/HisF family. In terms of assembly, heterodimer of HisH and HisF.

Its subcellular location is the cytoplasm. It catalyses the reaction 5-[(5-phospho-1-deoxy-D-ribulos-1-ylimino)methylamino]-1-(5-phospho-beta-D-ribosyl)imidazole-4-carboxamide + L-glutamine = D-erythro-1-(imidazol-4-yl)glycerol 3-phosphate + 5-amino-1-(5-phospho-beta-D-ribosyl)imidazole-4-carboxamide + L-glutamate + H(+). Its pathway is amino-acid biosynthesis; L-histidine biosynthesis; L-histidine from 5-phospho-alpha-D-ribose 1-diphosphate: step 5/9. In terms of biological role, IGPS catalyzes the conversion of PRFAR and glutamine to IGP, AICAR and glutamate. The HisF subunit catalyzes the cyclization activity that produces IGP and AICAR from PRFAR using the ammonia provided by the HisH subunit. This Deinococcus geothermalis (strain DSM 11300 / CIP 105573 / AG-3a) protein is Imidazole glycerol phosphate synthase subunit HisF.